The primary structure comprises 158 residues: FUN14 domain-containing protein 1 (158 aa).

The YXXL signature appears at 21–24; sequence YEVV. 2 consecutive transmembrane segments (helical) span residues 51 to 70 and 77 to 98; these read YSVTTQLVMGGLTGWCAGYL and IAATAVGGGFLLLQIANHSGYV.

The protein belongs to the FUN14 family.

Its subcellular location is the mitochondrion outer membrane. Functionally, acts as an activator of hypoxia-induced mitophagy, an important mechanism for mitochondrial quality control. The chain is FUN14 domain-containing protein 1 (fundc1) from Tetraodon nigroviridis (Spotted green pufferfish).